A 600-amino-acid chain; its full sequence is MSGTPIRGTPGGTPLSPTRISRLQEKEELRQLNDRLAVYIDRVRALELENDRLLVKISEKEEVTTREVSGIKNLYESELADARRVLDETAKERARLQIEIGKLRAELEEFNKSYKKKDADLSVAQGRIKDLEVLFHRSEAELNTVLNEKRSLEAEVADLRAQLAKAEDGHAVAKKQLEKETLMRVDLENRCQSLQEDLDFRKNVFEEEIRETRKRHEHRLVEVDTSRQQEYENKMAQALEDLRNQHDEQVKLYKMELEQTYQAKLENAILASDQNDKAAGAAREELKEARMRIESLSHQLSGLQKQASATEDRIRELKETMAGERDKFRKMLDAKEREMTEMRDQMQLQLTEYQELLDVKLALDMEISAYRKLLEGEEERLKLSPSPSSRVTVSRATSSSSSSSTSLVRSSRGKRRRIEAEELSGSGTSGIGTGSISGSSSSSSFQMSQQASATGSISIEEIDLEGKYVQLKNNSEKDQSLGNWRLKRQIGDGEEIAYKFTPKYVLRAGQTVTIWGADAGVSHSPPSVLVWKNQGSWGTGGNIRTYLVNSDGEEVAVRTVTKSVVVRENEEEEDEADFGEEDLFNQQGDPRTTSRGCLVM.

Positions 2 to 27 are head; the sequence is SGTPIRGTPGGTPLSPTRISRLQEKE. S16 bears the Phosphoserine; by CDK1 mark. In terms of domain architecture, IF rod spans 25–381; the sequence is EKEELRQLND…KLLEGEEERL (357 aa). Residues 28–64 are coil 1A; it reads ELRQLNDRLAVYIDRVRALELENDRLLVKISEKEEVT. Residues 75–212 are coil 1B; it reads YESELADARR…NVFEEEIRET (138 aa). Positions 237–379 are coil 2; it reads QALEDLRNQH…YRKLLEGEEE (143 aa). Disordered stretches follow at residues 377-449 and 568-600; these read EEER…QMSQ and ENEE…CLVM. A tail region spans residues 380-600; the sequence is RLKLSPSPSS…RTTSRGCLVM (221 aa). Over residues 383 to 410 the composition is skewed to low complexity; sequence LSPSPSSRVTVSRATSSSSSSSTSLVRS. S386 is modified (phosphoserine). Residues 414-419 carry the Nuclear localization signal motif; that stretch reads KRRRIE. Residues 445-562 enclose the LTD domain; sequence FQMSQQASAT…EEVAVRTVTK (118 aa). Residues 569–583 are compositionally biased toward acidic residues; it reads NEEEEDEADFGEEDL. Polar residues predominate over residues 584-600; the sequence is FNQQGDPRTTSRGCLVM. A Cysteine methyl ester modification is found at C597. The S-farnesyl cysteine moiety is linked to residue C597. Positions 598–600 are cleaved as a propeptide — removed in mature form; sequence LVM.

This sequence belongs to the intermediate filament family. Homodimer. Lamin dimers then assemble into dimeric head-to-tail polymers. Ultimately, two head-to-tail polymers assemble laterally into a protofilament with a uniformly shaped rod of 3.5 nm in diameter. Post-translationally, phosphorylation plays a key role in lamin organization, subcellular localization and nuclear envelope disintegration. Phosphorylation by CDK1 at Ser-16 at the onset of mitosis drives lamin disassembly and nuclear envelope breakdown.

It is found in the nucleus lamina. It localises to the nucleus envelope. Its subcellular location is the nucleus. The protein localises to the nucleoplasm. The protein resides in the nucleus matrix. Functionally, lamins are intermediate filament proteins that assemble into a filamentous meshwork, and which constitute the major components of the nuclear lamina, a fibrous layer on the nucleoplasmic side of the inner nuclear membrane. Lamins provide a framework for the nuclear envelope, bridging the nuclear envelope and chromatin. Plays an important role in nuclear assembly, chromatin organization, nuclear membrane and telomere dynamics. In Gallus gallus (Chicken), this protein is Lamin-B2 (LMNB2).